The chain runs to 82 residues: ATP synthase subunit c, chloroplastic (82 aa).

A run of 2 helical transmembrane segments spans residues 3–23 (PLIA…ASIG) and 57–77 (LAFM…LLFA).

Belongs to the ATPase C chain family. As to quaternary structure, F-type ATPases have 2 components, F(1) - the catalytic core - and F(0) - the membrane proton channel. F(1) has five subunits: alpha(3), beta(3), gamma(1), delta(1), epsilon(1). F(0) has four main subunits: a(1), b(1), b'(1) and c(10-14). The alpha and beta chains form an alternating ring which encloses part of the gamma chain. F(1) is attached to F(0) by a central stalk formed by the gamma and epsilon chains, while a peripheral stalk is formed by the delta, b and b' chains.

It is found in the plastid. The protein localises to the chloroplast thylakoid membrane. Its function is as follows. F(1)F(0) ATP synthase produces ATP from ADP in the presence of a proton or sodium gradient. F-type ATPases consist of two structural domains, F(1) containing the extramembraneous catalytic core and F(0) containing the membrane proton channel, linked together by a central stalk and a peripheral stalk. During catalysis, ATP synthesis in the catalytic domain of F(1) is coupled via a rotary mechanism of the central stalk subunits to proton translocation. Functionally, key component of the F(0) channel; it plays a direct role in translocation across the membrane. A homomeric c-ring of between 10-14 subunits forms the central stalk rotor element with the F(1) delta and epsilon subunits. The chain is ATP synthase subunit c, chloroplastic from Nephroselmis olivacea (Green alga).